Consider the following 129-residue polypeptide: Fluoride-specific ion channel FluC 2 (129 aa).

Residues 19–39 (GLGLVVPAAAVGGFPLGTLFI) traverse the membrane as a helical segment. Na(+)-binding residues include glycine 74 and threonine 77. Residues 95–115 (FGMAAVYIAASLFGGLLASWA) form a helical membrane-spanning segment.

The protein belongs to the fluoride channel Fluc/FEX (TC 1.A.43) family.

The protein resides in the cell membrane. The catalysed reaction is fluoride(in) = fluoride(out). With respect to regulation, na(+) is not transported, but it plays an essential structural role and its presence is essential for fluoride channel function. Its function is as follows. Fluoride-specific ion channel. Important for reducing fluoride concentration in the cell, thus reducing its toxicity. The chain is Fluoride-specific ion channel FluC 2 from Geobacillus kaustophilus (strain HTA426).